Reading from the N-terminus, the 494-residue chain is Cytochrome P450 2C44 (494 aa).

The signal sequence occupies residues 1 to 25 (MELLGLPTLALLVLVMSLSLLSVWT). A Phosphoserine modification is found at Ser131. An N6-acetyllysine mark is found at Lys253 and Lys379. Cys439 contributes to the heme binding site.

The protein belongs to the cytochrome P450 family. Heme is required as a cofactor. Highly expressed in liver, particularly in hepatocytes and bile duct epithelial cells (at protein level). Expressed in nephron segments. Prominent expression is detected in proximal tubules at the corticomedullary junction (at protein level). Also expressed in renal cortical collecting duct. Lower expression levels are detected in adrenal glands.

The protein localises to the endoplasmic reticulum membrane. It localises to the microsome membrane. It catalyses the reaction (5Z,8Z,11Z,14Z)-eicosatetraenoate + reduced [NADPH--hemoprotein reductase] + O2 = (8R,9S)-epoxy-(5Z,11Z,14Z)-eicosatrienoate + oxidized [NADPH--hemoprotein reductase] + H2O + H(+). The enzyme catalyses (5Z,8Z,11Z,14Z)-eicosatetraenoate + reduced [NADPH--hemoprotein reductase] + O2 = (11R,12S)-epoxy-(5Z,8Z,14Z)-eicosatrienoate + oxidized [NADPH--hemoprotein reductase] + H2O + H(+). It carries out the reaction (5Z,8Z,11Z,14Z)-eicosatetraenoate + reduced [NADPH--hemoprotein reductase] + O2 = 14,15-epoxy-(5Z,8Z,11Z)-eicosatrienoate + oxidized [NADPH--hemoprotein reductase] + H2O + H(+). The catalysed reaction is (5Z,8Z,11Z,14Z,17Z)-eicosapentaenoate + reduced [NADPH--hemoprotein reductase] + O2 = 8,9-epoxy-(5Z,11Z,14Z,17Z)-eicosatetraenoate + oxidized [NADPH--hemoprotein reductase] + H2O + H(+). It catalyses the reaction (5Z,8Z,11Z,14Z,17Z)-eicosapentaenoate + reduced [NADPH--hemoprotein reductase] + O2 = 11,12-epoxy-(5Z,8Z,14Z,17Z)-eicosatetraenoate + oxidized [NADPH--hemoprotein reductase] + H2O + H(+). The enzyme catalyses (5Z,8Z,11Z,14Z,17Z)-eicosapentaenoate + reduced [NADPH--hemoprotein reductase] + O2 = 14,15-epoxy-(5Z,8Z,11Z,17Z)-eicosatetraenoate + oxidized [NADPH--hemoprotein reductase] + H2O + H(+). It carries out the reaction (5Z,8Z,11Z,14Z,17Z)-eicosapentaenoate + reduced [NADPH--hemoprotein reductase] + O2 = (17R,18S)-epoxy-(5Z,8Z,11Z,14Z)-eicosatetraenoate + oxidized [NADPH--hemoprotein reductase] + H2O + H(+). The catalysed reaction is (5Z,8Z,11Z,14Z,17Z)-eicosapentaenoate + reduced [NADPH--hemoprotein reductase] + O2 = (17S,18R)-epoxy-(5Z,8Z,11Z,14Z)-eicosatetraenoate + oxidized [NADPH--hemoprotein reductase] + H2O + H(+). It catalyses the reaction 20-hydroxy-(5Z,8Z,11Z,14Z)-eicosatetraenoate + reduced [NADPH--hemoprotein reductase] + O2 = 20-hydroxy-8,9-epoxy-(5Z,11Z,14Z)-eicosatrienoate + oxidized [NADPH--hemoprotein reductase] + H2O + H(+). It functions in the pathway lipid metabolism; arachidonate metabolism. Its function is as follows. A cytochrome P450 monooxygenase involved in polyunsaturated fatty acids (PUFAs) metabolism and signaling. Catalyzes preferentially the epoxidation of double bonds of PUFAs. Converts arachidonic acid (ARA, C20:4(n-6)) primarily to stereospecific products 8R,9S-epoxyeicosatrienoate (EET) and 11R,12S-EET. Plays a major role in the formation of EETs and hydroxy-EETs (HEETs) in kidney. Via EETs may inhibit the epithelial sodium channels (ENaCs) in nephron segments, preventing excessive sodium absorption during high dietary salt intake. Participates in the formation of anti-inflammatory hydroxyepoxyeicosatrienoic acids (HEETs) by converting 20-hydroxyeicosatetraenoic acid (20-HETE) to 20,8,9-HEET, an activator of PPARA. Metabolizes eicosapentaenoic acid (EPA, C20:5(n-3)) to epoxyeicosatetraenoic acid (EETeTr) regioisomers, 8,9-, 11,12-, 14,15-, and 17,18- EETeTr, preferentially producing 17R,18S enantiomer. Mechanistically, uses molecular oxygen inserting one oxygen atom into a substrate, and reducing the second into a water molecule, with two electrons provided by NADPH via cytochrome P450 reductase (CPR; NADPH-ferrihemoprotein reductase). In Mus musculus (Mouse), this protein is Cytochrome P450 2C44.